We begin with the raw amino-acid sequence, 595 residues long: Aspartate--tRNA ligase (595 aa).

L-aspartate is bound at residue E173. Positions 197–200 (QLFK) are aspartate. R219 is an L-aspartate binding site. Residues 219–221 (RDE) and Q228 each bind ATP. Position 449 (H449) interacts with L-aspartate. E483 provides a ligand contact to ATP. R490 contacts L-aspartate. 535 to 538 (GLDR) contacts ATP.

The protein belongs to the class-II aminoacyl-tRNA synthetase family. Type 1 subfamily. Homodimer.

The protein resides in the cytoplasm. It catalyses the reaction tRNA(Asp) + L-aspartate + ATP = L-aspartyl-tRNA(Asp) + AMP + diphosphate. Functionally, catalyzes the attachment of L-aspartate to tRNA(Asp) in a two-step reaction: L-aspartate is first activated by ATP to form Asp-AMP and then transferred to the acceptor end of tRNA(Asp). The chain is Aspartate--tRNA ligase from Shewanella sediminis (strain HAW-EB3).